The sequence spans 186 residues: ATP synthase subunit delta (186 aa).

This sequence belongs to the ATPase delta chain family. In terms of assembly, F-type ATPases have 2 components, F(1) - the catalytic core - and F(0) - the membrane proton channel. F(1) has five subunits: alpha(3), beta(3), gamma(1), delta(1), epsilon(1). CF(0) has four main subunits: a(1), b(1), b'(1) and c(10-14). The alpha and beta chains form an alternating ring which encloses part of the gamma chain. F(1) is attached to F(0) by a central stalk formed by the gamma and epsilon chains, while a peripheral stalk is formed by the delta, b and b' chains.

The protein localises to the cell inner membrane. Functionally, f(1)F(0) ATP synthase produces ATP from ADP in the presence of a proton or sodium gradient. F-type ATPases consist of two structural domains, F(1) containing the extramembraneous catalytic core and F(0) containing the membrane proton channel, linked together by a central stalk and a peripheral stalk. During catalysis, ATP synthesis in the catalytic domain of F(1) is coupled via a rotary mechanism of the central stalk subunits to proton translocation. In terms of biological role, this protein is part of the stalk that links CF(0) to CF(1). It either transmits conformational changes from CF(0) to CF(1) or is implicated in proton conduction. This chain is ATP synthase subunit delta, found in Roseobacter denitrificans (strain ATCC 33942 / OCh 114) (Erythrobacter sp. (strain OCh 114)).